A 528-amino-acid chain; its full sequence is G patch domain-containing protein 2 (528 aa).

The tract at residues 36–119 (LEESSEQARG…NKKDHSDSDD (84 aa)) is disordered. The span at 63–77 (RQARKRRGRKRRSYN) shows a compositional bias: basic residues. Basic and acidic residues predominate over residues 98 to 117 (EPSKDYRENHNNNKKDHSDS). Ser-115, Ser-117, Ser-146, and Ser-195 each carry phosphoserine. Disordered stretches follow at residues 232-282 (SEET…GDDE) and 487-528 (GRDG…GKSA). Positions 239 to 252 (NKDKMECEEQKVSD) are enriched in basic and acidic residues. The G-patch domain occupies 467 to 513 (ENNIGNRMLQNMGWTPGSGLGRDGKGISEPIQAMQRPKGLGLGFPLP). A compositionally biased stretch (polar residues) spans 514–528 (KSTSATTTPNAGKSA).

Interacts with DHX15. In terms of tissue distribution, testis.

The protein localises to the nucleus speckle. It is found in the nucleus. Its subcellular location is the nucleolus. Functionally, enhances the ATPase activity of DHX15 in vitro. The protein is G patch domain-containing protein 2 (GPATCH2) of Homo sapiens (Human).